The sequence spans 206 residues: Amelogenin, Y isoform (206 aa).

Positions 1-16 (MGTWILFACLVGAAFA) are cleaved as a signal peptide. Residues 118 to 180 (VPGQQSMTPT…PPLPPMFPLR (63 aa)) form a disordered region. Low complexity predominate over residues 128–142 (QHHQPNLPLPAQQPF). Residues 143-180 (QPQPVQPQPHQPMQPQPPVQPMQPLLPQPPLPPMFPLR) are compositionally biased toward pro residues.

The protein belongs to the amelogenin family.

Its subcellular location is the secreted. The protein resides in the extracellular space. It is found in the extracellular matrix. Its function is as follows. Plays a role in biomineralization. Seems to regulate the formation of crystallites during the secretory stage of tooth enamel development. Thought to play a major role in the structural organization and mineralization of developing enamel. In Homo sapiens (Human), this protein is Amelogenin, Y isoform (AMELY).